The following is a 663-amino-acid chain: Protein associated with UVRAG as autophagy enhancer (663 aa).

Disordered regions lie at residues 1–36 (MVSQ…LDTE) and 65–136 (DASP…EERA). Polar residues-rich tracts occupy residues 80–93 (TASN…TSPL) and 105–130 (PKGT…SSVT). Residues 196-235 (EAFVLPVDAEKENAHFYVADMIISVMEKMKCNILSQQHTE) are interaction with UVRAG. N6-acetyllysine is present on residues lysine 484, lysine 534, lysine 574, and lysine 634.

As to quaternary structure, interacts with UVRAG; the interaction is direct and promotes association with the PI3K/PI3KC3 and HOPS complexes. Interacts with STX17. Post-translationally, acetylated by KAT5/TIP60 under autophagy induction, promoting autophagosome maturation and lipid metabolism. Lys-484 and Lys-574 constitute the key sites for tuning function in autophagy.

The protein resides in the cytoplasmic vesicle. The protein localises to the autophagosome membrane. Regulator of autophagy that promotes autophagosome maturation by facilitating the biogenesis of phosphatidylinositol 3-phosphate (PtdIns(3)P) in late steps of autophagy. Acts by antagonizing RUBCN, thereby stimulating phosphatidylinositol 3-kinase activity of the PI3K/PI3KC3 complex. Following anchorage to the autophagosomal SNARE STX17, promotes the recruitment of PI3K/PI3KC3 and HOPS complexes to the autophagosome to regulate the fusion specificity of autophagosomes with late endosomes/lysosomes. Binds phosphoinositides phosphatidylinositol 3-phosphate (PtdIns(3)P), 4-phosphate (PtdIns(4)P) and 5-phosphate (PtdIns(5)P). In addition to its role in autophagy, acts as a regulator of lipid and glycogen homeostasis. May act as a tumor suppressor. The polypeptide is Protein associated with UVRAG as autophagy enhancer (Bos taurus (Bovine)).